Consider the following 433-residue polypeptide: Enolase (433 aa).

Q163 serves as a coordination point for (2R)-2-phosphoglycerate. Catalysis depends on E205, which acts as the Proton donor. Mg(2+) is bound by residues D242, E285, and D312. K337, R366, S367, and K388 together coordinate (2R)-2-phosphoglycerate. Catalysis depends on K337, which acts as the Proton acceptor.

It belongs to the enolase family. The cofactor is Mg(2+).

Its subcellular location is the cytoplasm. The protein localises to the secreted. It is found in the cell surface. The enzyme catalyses (2R)-2-phosphoglycerate = phosphoenolpyruvate + H2O. Its pathway is carbohydrate degradation; glycolysis; pyruvate from D-glyceraldehyde 3-phosphate: step 4/5. In terms of biological role, catalyzes the reversible conversion of 2-phosphoglycerate (2-PG) into phosphoenolpyruvate (PEP). It is essential for the degradation of carbohydrates via glycolysis. The sequence is that of Enolase from Lawsonia intracellularis (strain PHE/MN1-00).